The chain runs to 259 residues: 3-deoxy-manno-octulosonate cytidylyltransferase (259 aa).

This sequence belongs to the KdsB family.

Its subcellular location is the cytoplasm. The catalysed reaction is 3-deoxy-alpha-D-manno-oct-2-ulosonate + CTP = CMP-3-deoxy-beta-D-manno-octulosonate + diphosphate. The protein operates within nucleotide-sugar biosynthesis; CMP-3-deoxy-D-manno-octulosonate biosynthesis; CMP-3-deoxy-D-manno-octulosonate from 3-deoxy-D-manno-octulosonate and CTP: step 1/1. It participates in bacterial outer membrane biogenesis; lipopolysaccharide biosynthesis. In terms of biological role, activates KDO (a required 8-carbon sugar) for incorporation into bacterial lipopolysaccharide in Gram-negative bacteria. This chain is 3-deoxy-manno-octulosonate cytidylyltransferase, found in Aeromonas salmonicida (strain A449).